Consider the following 258-residue polypeptide: Chaperone protein caf1M (258 aa).

An N-terminal signal peptide occupies residues 1–20 (MILNRLSTLGIITFGMLSFA). A disulfide bridge links Cys-121 with Cys-160.

This sequence belongs to the periplasmic pilus chaperone family.

The protein resides in the periplasm. Its function is as follows. Has a stimulatory role for the envelope antigen F1 secretion. It seems to interact with the subunit polypeptide and to prevent it from digestion by a protease. This is Chaperone protein caf1M (caf1M) from Yersinia pestis.